Consider the following 113-residue polypeptide: UPF0251 protein TK0562 (113 aa).

This sequence belongs to the UPF0251 family.

This is UPF0251 protein TK0562 from Thermococcus kodakarensis (strain ATCC BAA-918 / JCM 12380 / KOD1) (Pyrococcus kodakaraensis (strain KOD1)).